We begin with the raw amino-acid sequence, 653 residues long: Chaperone protein DnaK (653 aa).

Residue Thr-200 is modified to Phosphothreonine; by autocatalysis. Residues 612 to 653 (QGAAGAAGAAGGAGAAAGAEAAGASQQADDVVDAEFKEVKKD) are disordered. Residues 627-639 (AAGAEAAGASQQA) are compositionally biased toward low complexity.

This sequence belongs to the heat shock protein 70 family.

Functionally, acts as a chaperone. The sequence is that of Chaperone protein DnaK from Paraburkholderia phymatum (strain DSM 17167 / CIP 108236 / LMG 21445 / STM815) (Burkholderia phymatum).